The sequence spans 165 residues: SsrA-binding protein (165 aa).

Basic and acidic residues predominate over residues 135–158 (QAHDKRQDMARRDAQREVTRELGR). The disordered stretch occupies residues 135 to 165 (QAHDKRQDMARRDAQREVTRELGRRVKGMTS).

The protein belongs to the SmpB family.

The protein localises to the cytoplasm. Its function is as follows. Required for rescue of stalled ribosomes mediated by trans-translation. Binds to transfer-messenger RNA (tmRNA), required for stable association of tmRNA with ribosomes. tmRNA and SmpB together mimic tRNA shape, replacing the anticodon stem-loop with SmpB. tmRNA is encoded by the ssrA gene; the 2 termini fold to resemble tRNA(Ala) and it encodes a 'tag peptide', a short internal open reading frame. During trans-translation Ala-aminoacylated tmRNA acts like a tRNA, entering the A-site of stalled ribosomes, displacing the stalled mRNA. The ribosome then switches to translate the ORF on the tmRNA; the nascent peptide is terminated with the 'tag peptide' encoded by the tmRNA and targeted for degradation. The ribosome is freed to recommence translation, which seems to be the essential function of trans-translation. This chain is SsrA-binding protein, found in Mycolicibacterium vanbaalenii (strain DSM 7251 / JCM 13017 / BCRC 16820 / KCTC 9966 / NRRL B-24157 / PYR-1) (Mycobacterium vanbaalenii).